The following is a 66-amino-acid chain: Large ribosomal subunit protein bL35 (66 aa).

The protein belongs to the bacterial ribosomal protein bL35 family. Part of the 50S ribosomal subunit. Contacts proteins L15 and L33.

Functionally, binds the 23S rRNA. The protein is Large ribosomal subunit protein bL35 (rpmI) of Deinococcus radiodurans (strain ATCC 13939 / DSM 20539 / JCM 16871 / CCUG 27074 / LMG 4051 / NBRC 15346 / NCIMB 9279 / VKM B-1422 / R1).